Consider the following 389-residue polypeptide: Mannitol-1-phosphate 5-dehydrogenase (389 aa).

7–18 (AVHFGGGNIGRG) lines the NAD(+) pocket. Lysine 216 is a catalytic residue.

This sequence belongs to the mannitol dehydrogenase family. In terms of assembly, monomer.

The catalysed reaction is D-mannitol 1-phosphate + NAD(+) = beta-D-fructose 6-phosphate + NADH + H(+). Its function is as follows. Catalyzes the NAD(H)-dependent interconversion of D-fructose 6-phosphate and D-mannitol 1-phosphate in the mannitol metabolic pathway. This chain is Mannitol-1-phosphate 5-dehydrogenase, found in Pyrenophora tritici-repentis (strain Pt-1C-BFP) (Wheat tan spot fungus).